A 539-amino-acid chain; its full sequence is Chaperonin GroEL (539 aa).

Residues 29–32, 86–90, glycine 413, 476–478, and aspartate 492 contribute to the ATP site; these read TLGP, DGTTT, and NAA.

The protein belongs to the chaperonin (HSP60) family. As to quaternary structure, forms a cylinder of 14 subunits composed of two heptameric rings stacked back-to-back. Interacts with the co-chaperonin GroES.

The protein localises to the cytoplasm. The enzyme catalyses ATP + H2O + a folded polypeptide = ADP + phosphate + an unfolded polypeptide.. Its function is as follows. Together with its co-chaperonin GroES, plays an essential role in assisting protein folding. The GroEL-GroES system forms a nano-cage that allows encapsulation of the non-native substrate proteins and provides a physical environment optimized to promote and accelerate protein folding. This is Chaperonin GroEL from Macrococcus caseolyticus (strain JCSC5402) (Macrococcoides caseolyticum).